A 904-amino-acid chain; its full sequence is Phosphoenolpyruvate carboxylase (904 aa).

Residues His151 and Lys570 contribute to the active site.

It belongs to the PEPCase type 1 family. Mg(2+) serves as cofactor.

It carries out the reaction oxaloacetate + phosphate = phosphoenolpyruvate + hydrogencarbonate. Functionally, forms oxaloacetate, a four-carbon dicarboxylic acid source for the tricarboxylic acid cycle. In Xanthomonas campestris pv. campestris (strain 8004), this protein is Phosphoenolpyruvate carboxylase.